Here is a 777-residue protein sequence, read N- to C-terminus: Reticulon-1 (777 aa).

Disordered regions lie at residues 1–77 (MAAP…ETAS), 129–182 (NGHI…ILAD), 198–245 (TRPQ…PVEG), and 293–573 (ATHE…IPGP). Phosphoserine is present on residues Ser13 and Ser68. The span at 199-233 (RPQEAKGQEEQSPGLEDKDLDFKDKDSEVSTKPEG) shows a compositional bias: basic and acidic residues. Phosphoserine is present on residues Ser210, Ser241, and Ser325. Residues 326 to 339 (PGSVTPPSSGTEPS) show a composition bias toward low complexity. Phosphoserine occurs at positions 348 and 350. The segment covering 393–406 (IPSSLDQEASSAES) has biased composition (polar residues). Residue Ser485 is modified to Phosphoserine. The segment covering 495 to 510 (AIREETSSRATEERAP) has biased composition (basic and acidic residues). Polar residues predominate over residues 525-534 (TPVTLQSRPE). In terms of domain architecture, Reticulon spans 590–777 (AIDLLYWRDI…KIPGAKRHAE (188 aa)). 2 helical membrane passes run 604–624 (IVFGSFLLLLFSLTQFSVVSV) and 706–726 (FAVLMWLLTYVGALFNGLTLL).

In terms of assembly, interacts with NDRG1. Interacts with BACE1. Interacts with TMEM33. As to quaternary structure, interacts with UGCG; regulates the ceramide glucosyltransferase activity of UGCG. Expressed predominantly in central and peripheral nervous system of newborn and adult rats. Low levels have been also detected in heart, adrenal gland and spleen. Expression of isoform RTN1-B is restricted to particular neuronal types.

The protein resides in the endoplasmic reticulum membrane. It is found in the golgi apparatus membrane. Its function is as follows. Inhibits amyloid precursor protein processing, probably by blocking BACE1 activity. The protein is Reticulon-1 (Rtn1) of Rattus norvegicus (Rat).